Reading from the N-terminus, the 453-residue chain is Probable glycine dehydrogenase (decarboxylating) subunit 1 (453 aa).

It belongs to the GcvP family. N-terminal subunit subfamily. In terms of assembly, the glycine cleavage system is composed of four proteins: P, T, L and H. In this organism, the P 'protein' is a heterodimer of two subunits.

The catalysed reaction is N(6)-[(R)-lipoyl]-L-lysyl-[glycine-cleavage complex H protein] + glycine + H(+) = N(6)-[(R)-S(8)-aminomethyldihydrolipoyl]-L-lysyl-[glycine-cleavage complex H protein] + CO2. Functionally, the glycine cleavage system catalyzes the degradation of glycine. The P protein binds the alpha-amino group of glycine through its pyridoxal phosphate cofactor; CO(2) is released and the remaining methylamine moiety is then transferred to the lipoamide cofactor of the H protein. The sequence is that of Probable glycine dehydrogenase (decarboxylating) subunit 1 from Erythrobacter litoralis (strain HTCC2594).